The chain runs to 457 residues: Siroheme synthase (457 aa).

The interval 1-204 is precorrin-2 dehydrogenase /sirohydrochlorin ferrochelatase; the sequence is MDHLPIFCQL…ADEKAVNATT (204 aa). NAD(+) contacts are provided by residues 22 to 23 and 43 to 44; these read DV and LN. The residue at position 128 (serine 128) is a Phosphoserine. The tract at residues 216-457 is uroporphyrinogen-III C-methyltransferase; it reads GEVVLVGAGP…RDKLNWFSNH (242 aa). Proline 225 contacts S-adenosyl-L-methionine. Aspartate 248 (proton acceptor) is an active-site residue. Residue lysine 270 is the Proton donor of the active site. S-adenosyl-L-methionine is bound by residues 301 to 303, isoleucine 306, 331 to 332, methionine 382, and glycine 411; these read GGD and TA.

In the N-terminal section; belongs to the precorrin-2 dehydrogenase / sirohydrochlorin ferrochelatase family. This sequence in the C-terminal section; belongs to the precorrin methyltransferase family.

The catalysed reaction is uroporphyrinogen III + 2 S-adenosyl-L-methionine = precorrin-2 + 2 S-adenosyl-L-homocysteine + H(+). It catalyses the reaction precorrin-2 + NAD(+) = sirohydrochlorin + NADH + 2 H(+). The enzyme catalyses siroheme + 2 H(+) = sirohydrochlorin + Fe(2+). Its pathway is cofactor biosynthesis; adenosylcobalamin biosynthesis; precorrin-2 from uroporphyrinogen III: step 1/1. The protein operates within cofactor biosynthesis; adenosylcobalamin biosynthesis; sirohydrochlorin from precorrin-2: step 1/1. It functions in the pathway porphyrin-containing compound metabolism; siroheme biosynthesis; precorrin-2 from uroporphyrinogen III: step 1/1. It participates in porphyrin-containing compound metabolism; siroheme biosynthesis; siroheme from sirohydrochlorin: step 1/1. Its pathway is porphyrin-containing compound metabolism; siroheme biosynthesis; sirohydrochlorin from precorrin-2: step 1/1. Functionally, multifunctional enzyme that catalyzes the SAM-dependent methylations of uroporphyrinogen III at position C-2 and C-7 to form precorrin-2 via precorrin-1. Then it catalyzes the NAD-dependent ring dehydrogenation of precorrin-2 to yield sirohydrochlorin. Finally, it catalyzes the ferrochelation of sirohydrochlorin to yield siroheme. The polypeptide is Siroheme synthase (Salmonella paratyphi A (strain ATCC 9150 / SARB42)).